Consider the following 142-residue polypeptide: U1 small nuclear ribonucleoprotein C (142 aa).

The Matrin-type zinc-finger motif lies at 4–36 (YYCDYCDTFLTHDSPSVRKTHNGGRKHKDNVRM).

It belongs to the U1 small nuclear ribonucleoprotein C family. U1 snRNP is composed of the 7 core Sm proteins B/B', D1, D2, D3, E, F and G that assemble in a heptameric protein ring on the Sm site of the small nuclear RNA to form the core snRNP, and at least 3 U1 snRNP-specific proteins U1-70K, U1-A and U1-C. U1-C interacts with U1 snRNA and the 5' splice-site region of the pre-mRNA.

It localises to the nucleus. Its function is as follows. Component of the spliceosomal U1 snRNP, which is essential for recognition of the pre-mRNA 5' splice-site and the subsequent assembly of the spliceosome. U1-C is directly involved in initial 5' splice-site recognition for both constitutive and regulated alternative splicing. The interaction with the 5' splice-site seems to precede base-pairing between the pre-mRNA and the U1 snRNA. Stimulates commitment or early (E) complex formation by stabilizing the base pairing of the 5' end of the U1 snRNA and the 5' splice-site region. The protein is U1 small nuclear ribonucleoprotein C of Caenorhabditis briggsae.